Consider the following 202-residue polypeptide: Arenicin-1 (202 aa).

A signal peptide spans 1–25; sequence MTSTQSVAVCATLILAIFCVNDIHC. Residues 26–181 constitute a propeptide that is removed on maturation; sequence DPIAEARAAA…SGDNNEPEKR (156 aa). The region spanning 73–168 is the BRICHOS domain; that stretch reads GDGVEGSVMV…ACQGKSVYWL (96 aa). Cystine bridges form between Cys100/Cys160 and Cys184/Cys201.

Has antimicrobial activity against the Gram-negative bacteria E.coli and P.mirabilis, the Gram-positive bacterium L.monocytogenes and the yeast C.albicans. This is Arenicin-1 from Arenicola marina (Lugworm).